The chain runs to 466 residues: Glutamate decarboxylase (466 aa).

Residue Lys277 is modified to N6-(pyridoxal phosphate)lysine.

This sequence belongs to the group II decarboxylase family. Requires pyridoxal 5'-phosphate as cofactor.

It carries out the reaction L-glutamate + H(+) = 4-aminobutanoate + CO2. Converts internalized glutamate to GABA and increases the internal pH. Involved in glutamate-dependent acid resistance. This Lactococcus lactis subsp. cremoris (strain MG1363) protein is Glutamate decarboxylase (gadB).